The following is a 619-amino-acid chain: DNA mismatch repair protein MutL (619 aa).

Positions 368–378 (VDEPKQVDEPK) are enriched in basic and acidic residues. The interval 368 to 403 (VDEPKQVDEPKQSSPVQEPKEEIPSFLPTVESKQND) is disordered.

Belongs to the DNA mismatch repair MutL/HexB family.

This protein is involved in the repair of mismatches in DNA. It is required for dam-dependent methyl-directed DNA mismatch repair. May act as a 'molecular matchmaker', a protein that promotes the formation of a stable complex between two or more DNA-binding proteins in an ATP-dependent manner without itself being part of a final effector complex. In Geobacillus sp. (strain WCH70), this protein is DNA mismatch repair protein MutL.